Reading from the N-terminus, the 1411-residue chain is DNA-directed RNA polymerase subunit beta' (1411 aa).

Residues C70, C72, C85, and C88 each contribute to the Zn(2+) site. Residues D460, D462, and D464 each coordinate Mg(2+). Positions 814, 888, 895, and 898 each coordinate Zn(2+).

Belongs to the RNA polymerase beta' chain family. The RNAP catalytic core consists of 2 alpha, 1 beta, 1 beta' and 1 omega subunit. When a sigma factor is associated with the core the holoenzyme is formed, which can initiate transcription. Mg(2+) is required as a cofactor. The cofactor is Zn(2+).

The catalysed reaction is RNA(n) + a ribonucleoside 5'-triphosphate = RNA(n+1) + diphosphate. DNA-dependent RNA polymerase catalyzes the transcription of DNA into RNA using the four ribonucleoside triphosphates as substrates. The polypeptide is DNA-directed RNA polymerase subunit beta' (Idiomarina loihiensis (strain ATCC BAA-735 / DSM 15497 / L2-TR)).